A 611-amino-acid chain; its full sequence is UvrABC system protein C (611 aa).

Residues 14–91 enclose the GIY-YIG domain; sequence TSPGCYIHKD…IKENQPKYNI (78 aa). The UVR domain occupies 196 to 231; the sequence is DQIIEDLRGKMAGAAQAMEFEKAAEYRDLIQSIGTL. The segment at 587–611 is disordered; that stretch reads KLNPKTQEQEQAQLREVAEPQIGLE.

Belongs to the UvrC family. Interacts with UvrB in an incision complex.

It is found in the cytoplasm. In terms of biological role, the UvrABC repair system catalyzes the recognition and processing of DNA lesions. UvrC both incises the 5' and 3' sides of the lesion. The N-terminal half is responsible for the 3' incision and the C-terminal half is responsible for the 5' incision. This is UvrABC system protein C from Streptococcus sanguinis (strain SK36).